The following is an 800-amino-acid chain: Putative antiporter subunit mnhA2 (800 aa).

20 helical membrane-spanning segments follow: residues 1-21 (MSLVYLLIAILVIMAMILLTS), 33-53 (IALTAPVIASIYFLLQVPSVI), 78-98 (GLSLMFSLIISLIGIAVFFYA), 118-138 (LFMFSMLGIVLADNTILMYVF), 167-187 (FMITVFGGLALLVGFIMLYIM), 207-227 (ALFIPMIIMFLLGAFTKSAQF), 241-261 (TPVSAYLHSATMVKAGIFLLL), 273-293 (YIYIVTFVGLITMLFGSITAL), 300-320 (GILAYSTISQLGMIMAMVGIG), 331-351 (IASIYVFVLFAALFHLMNHAI), 387-407 (LVMMIAALSMAGVPFLNGFLS), 424-444 (FSLISMIIIVCMGVIASIFTF), 472-492 (PWLFSLPSLILMVLVPVIFFV), 527-547 (GFNIPLLLTIIIILLGSVLAI), 595-615 (IIMTLGIFMVIIGYGYIRIGL), 627-647 (GPLEVILAIVTVIIGLSLIFI), 651-671 (LTMVILNGVIGFVVTLFFIAM), 676-696 (LALTQLVVETITTILFIVSFS), 712-732 (IIKISVSLMMALIVVSLIFIA), and 768-788 (LDTLFEGLVLIITGLGIYTLL).

Belongs to the CPA3 antiporters (TC 2.A.63) subunit A family. In terms of assembly, may form a heterooligomeric complex that consists of seven subunits: mnhA2, mnhB2, mnhC2, mnhD2, mnhE2, mnhF2 and mnhG2.

It is found in the cell membrane. The polypeptide is Putative antiporter subunit mnhA2 (mnhA2) (Staphylococcus aureus (strain MRSA252)).